The primary structure comprises 92 residues: DNA/RNA-binding protein Alba (92 aa).

N6-acetyllysine is present on Lys11.

This sequence belongs to the histone-like Alba family. Post-translationally, acetylated. Acetylation at Lys-11 decreases DNA-binding affinity.

Its subcellular location is the cytoplasm. It localises to the chromosome. In terms of biological role, binds double-stranded DNA tightly but without sequence specificity. Involved in DNA compaction. This chain is DNA/RNA-binding protein Alba, found in Pyrobaculum neutrophilum (strain DSM 2338 / JCM 9278 / NBRC 100436 / V24Sta) (Thermoproteus neutrophilus).